Consider the following 235-residue polypeptide: NAD(P)H-hydrate epimerase (235 aa).

A YjeF N-terminal domain is found at 18–221; the sequence is AAQIDEQLFT…SLVDEHELLM (204 aa). 65 to 69 serves as a coordination point for (6S)-NADPHX; sequence NNGGD. Residues Asn66 and Asp127 each contribute to the K(+) site. (6S)-NADPHX is bound by residues 131 to 137 and Asp160; that span reads GFSFHPP. Ser163 contributes to the K(+) binding site.

Belongs to the NnrE/AIBP family. It depends on K(+) as a cofactor.

The enzyme catalyses (6R)-NADHX = (6S)-NADHX. It carries out the reaction (6R)-NADPHX = (6S)-NADPHX. Functionally, catalyzes the epimerization of the S- and R-forms of NAD(P)HX, a damaged form of NAD(P)H that is a result of enzymatic or heat-dependent hydration. This is a prerequisite for the S-specific NAD(P)H-hydrate dehydratase to allow the repair of both epimers of NAD(P)HX. This chain is NAD(P)H-hydrate epimerase, found in Caenorhabditis elegans.